Consider the following 395-residue polypeptide: XK-related protein 8 (395 aa).

Topologically, residues 1–12 (MPWSSRGALLRD) are cytoplasmic. Residues 13–33 (LVLGVLGTAAFLLDLGTDLWA) traverse the membrane as a helical segment. Residues 34–47 (AVQYALGGRYLWAA) are Extracellular-facing. Residues 48-68 (LVLALLGLASVALQLFSWLWL) traverse the membrane as a helical segment. Residues 69–158 (RADPAGLHGS…VLAIMLQSGR (90 aa)) lie on the Cytoplasmic side of the membrane. A helical membrane pass occupies residues 159 to 179 (AEYYQWVGICTSFLGISWALL). Residues 180–200 (DYHRALRTCLPSRPLLGLGSS) are Extracellular-facing. A helical membrane pass occupies residues 201 to 221 (VIYFLWNLLLLWPRVLAVALF). The Cytoplasmic portion of the chain corresponds to 222-223 (SA). A helical transmembrane segment spans residues 224-244 (LFPSYVALHFLGLWLVLLLWV). Residues 245-258 (WLQGTDFMPDPSSE) lie on the Extracellular side of the membrane. The helical transmembrane segment at 259–279 (WLYQVTVATILYFSWFNVAEG) threads the bilayer. Over 280–284 (RTRGR) the chain is Cytoplasmic. The chain crosses the membrane as a helical span at residues 285–305 (AIIHFAFLLSDSILLVATWVT). Residues 306–312 (HSSWLPS) are Extracellular-facing. A helical membrane pass occupies residues 313 to 333 (GIPLQLWLPVGCGCFFLGLAL). Over 334 to 395 (RLVYYHWLHP…KDEAALPVKG (62 aa)) the chain is Cytoplasmic. Residue serine 362 is modified to Phosphoserine. At threonine 375 the chain carries Phosphothreonine.

Belongs to the XK family. Interacts with BSG and NPTN; which act as chaperones to localize XKR8 at the cell membrane. In terms of assembly, homodimer. Undergoes proteolytic processing by caspase-3 (CASP3), leading to its activation. Post-translationally, phosphorylation at Thr-375 activates the phospholipid scramblase activity.

It is found in the cell membrane. It localises to the cytoplasm. The protein localises to the perinuclear region. It carries out the reaction a 1,2-diacyl-sn-glycero-3-phospho-L-serine(in) = a 1,2-diacyl-sn-glycero-3-phospho-L-serine(out). With respect to regulation, activated upon caspase cleavage to generate the XK-related protein 8, processed form. Does not act prior the onset of apoptosis. Functionally, phospholipid scramblase that promotes phosphatidylserine exposure on apoptotic cell surface. Phosphatidylserine is a specific marker only present at the surface of apoptotic cells and acts as a specific signal for engulfment. Required for the clearance of apoptotic cells, such as engulfment of apoptotic germ cells by Sertoli cells, clearance of senescent neutrophils or regulation of bipolar cell numbers in the retina. Has no effect on calcium-induced exposure of phosphatidylserine. Promotes myoblast differentiation and survival. The polypeptide is XK-related protein 8 (Pan troglodytes (Chimpanzee)).